The sequence spans 422 residues: Histidinol dehydrogenase (422 aa).

NAD(+) contacts are provided by Y123, Q183, and N206. Residues S229, Q251, and H254 each contribute to the substrate site. Zn(2+)-binding residues include Q251 and H254. Catalysis depends on proton acceptor residues E320 and H321. H321, D354, E408, and H413 together coordinate substrate. D354 provides a ligand contact to Zn(2+). Position 413 (H413) interacts with Zn(2+).

The protein belongs to the histidinol dehydrogenase family. Zn(2+) is required as a cofactor.

It catalyses the reaction L-histidinol + 2 NAD(+) + H2O = L-histidine + 2 NADH + 3 H(+). Its pathway is amino-acid biosynthesis; L-histidine biosynthesis; L-histidine from 5-phospho-alpha-D-ribose 1-diphosphate: step 9/9. Its function is as follows. Catalyzes the sequential NAD-dependent oxidations of L-histidinol to L-histidinaldehyde and then to L-histidine. The protein is Histidinol dehydrogenase of Natronomonas pharaonis (strain ATCC 35678 / DSM 2160 / CIP 103997 / JCM 8858 / NBRC 14720 / NCIMB 2260 / Gabara) (Halobacterium pharaonis).